The primary structure comprises 404 residues: Corticosteroid-binding globulin (404 aa).

The signal sequence occupies residues 1–22 (MLPTLYTCLLWLSTSGLWTVQA). Asparagine 95, asparagine 119, and asparagine 175 each carry an N-linked (GlcNAc...) asparagine glycan. Glutamine 253 lines the cortisol pocket. Residue asparagine 259 is glycosylated (N-linked (GlcNAc...) asparagine). Glutamine 285 contacts cortisol. N-linked (GlcNAc...) asparagine glycosylation is present at asparagine 326. Position 392 (tryptophan 392) interacts with cortisol.

The protein belongs to the serpin family. Glycosylation in position Asn-259 is needed for steroid binding.

It is found in the secreted. Major transport protein for glucocorticoids and progestins in the blood of almost all vertebrate species. This chain is Corticosteroid-binding globulin (SERPINA6), found in Bos taurus (Bovine).